The sequence spans 577 residues: Arginine--tRNA ligase (577 aa).

The 'HIGH' region motif lies at 122 to 132 (PNVAKEMHVGH).

It belongs to the class-I aminoacyl-tRNA synthetase family. As to quaternary structure, monomer.

It is found in the cytoplasm. The enzyme catalyses tRNA(Arg) + L-arginine + ATP = L-arginyl-tRNA(Arg) + AMP + diphosphate. The chain is Arginine--tRNA ligase from Vibrio campbellii (strain ATCC BAA-1116).